The sequence spans 880 residues: Alanine--tRNA ligase (880 aa).

Belongs to the class-II aminoacyl-tRNA synthetase family.

It is found in the cytoplasm. The enzyme catalyses tRNA(Ala) + L-alanine + ATP = L-alanyl-tRNA(Ala) + AMP + diphosphate. Its function is as follows. Catalyzes the attachment of alanine to tRNA(Ala) in a two-step reaction: alanine is first activated by ATP to form Ala-AMP and then transferred to the acceptor end of tRNA(Ala). Also edits incorrectly charged Ser-tRNA(Ala) and Gly-tRNA(Ala) via its editing domain. This is Alanine--tRNA ligase (alaS) from Lactiplantibacillus plantarum (strain ATCC BAA-793 / NCIMB 8826 / WCFS1) (Lactobacillus plantarum).